A 309-amino-acid polypeptide reads, in one-letter code: tRNA dimethylallyltransferase (309 aa).

11-18 is an ATP binding site; that stretch reads GPTATGKS. Residue 13-18 participates in substrate binding; it reads TATGKS.

It belongs to the IPP transferase family. Monomer. It depends on Mg(2+) as a cofactor.

It carries out the reaction adenosine(37) in tRNA + dimethylallyl diphosphate = N(6)-dimethylallyladenosine(37) in tRNA + diphosphate. Its function is as follows. Catalyzes the transfer of a dimethylallyl group onto the adenine at position 37 in tRNAs that read codons beginning with uridine, leading to the formation of N6-(dimethylallyl)adenosine (i(6)A). The protein is tRNA dimethylallyltransferase of Rhodococcus jostii (strain RHA1).